We begin with the raw amino-acid sequence, 204 residues long: UPF0215 protein MTH_1316 (204 aa).

The protein belongs to the UPF0215 family.

In Methanothermobacter thermautotrophicus (strain ATCC 29096 / DSM 1053 / JCM 10044 / NBRC 100330 / Delta H) (Methanobacterium thermoautotrophicum), this protein is UPF0215 protein MTH_1316.